Consider the following 200-residue polypeptide: 2-phospho-L-lactate guanylyltransferase (200 aa).

Belongs to the CofC family. In terms of assembly, homodimer.

The catalysed reaction is (2S)-2-phospholactate + GTP + H(+) = (2S)-lactyl-2-diphospho-5'-guanosine + diphosphate. Its pathway is cofactor biosynthesis; coenzyme F420 biosynthesis. Functionally, guanylyltransferase that catalyzes the activation of (2S)-2-phospholactate (2-PL) as (2S)-lactyl-2-diphospho-5'-guanosine, via the condensation of 2-PL with GTP. It is involved in the biosynthesis of coenzyme F420, a hydride carrier cofactor. The chain is 2-phospho-L-lactate guanylyltransferase from Ferroglobus placidus (strain DSM 10642 / AEDII12DO).